Reading from the N-terminus, the 464-residue chain is Macrophage metalloelastase (464 aa).

Positions 1–17 are cleaved as a signal peptide; it reads MKFLLLILTLWVTSSGA. The propeptide at 18-100 is activation peptide; the sequence is DPLKENDMLF…DVYHFKTMPG (83 aa). N-linked (GlcNAc...) asparagine glycosylation is present at asparagine 69. The short motif at 85–92 is the Cysteine switch element; the sequence is PRCGVPDV. A Zn(2+)-binding site is contributed by cysteine 87. 2 residues coordinate Ca(2+): aspartate 119 and aspartate 153. Histidine 163 and aspartate 165 together coordinate Zn(2+). The Ca(2+) site is built by aspartate 170, glycine 171, glycine 173, and valine 175. Histidine 178 is a binding site for Zn(2+). The Ca(2+) site is built by glycine 185, glycine 187, and aspartate 189. Histidine 191 contacts Zn(2+). Residues aspartate 193, glutamate 194, and glutamate 196 each contribute to the Ca(2+) site. Histidine 213 provides a ligand contact to Zn(2+). Glutamate 214 is an active-site residue. Residues histidine 217 and histidine 223 each coordinate Zn(2+). Hemopexin repeat units follow at residues 274–323, 324–370, 372–420, and 421–464; these read PTAC…WPTL, PSGI…GFPD, VKKI…FPGI, and GPKI…WFDC. Cysteines 277 and 464 form a disulfide. 4 residues coordinate Ca(2+): aspartate 284, glutamate 328, aspartate 376, and aspartate 425.

Belongs to the peptidase M10A family. It depends on Ca(2+) as a cofactor. Zn(2+) is required as a cofactor.

It is found in the secreted. The protein resides in the extracellular space. The protein localises to the extracellular matrix. It carries out the reaction Hydrolysis of soluble and insoluble elastin. Specific cleavages are also produced at 14-Ala-|-Leu-15 and 16-Tyr-|-Leu-17 in the B chain of insulin.. In terms of biological role, may be involved in tissue injury and remodeling. Has significant elastolytic activity. Can accept large and small amino acids at the P1' site, but has a preference for leucine. Aromatic or hydrophobic residues are preferred at the P1 site, with small hydrophobic residues (preferably alanine) occupying P3. This chain is Macrophage metalloelastase (MMP12), found in Oryctolagus cuniculus (Rabbit).